The primary structure comprises 1370 residues: DNA polymerase II large subunit (1370 aa).

2 disordered regions span residues 279 to 317 (IGAD…PRAA) and 1041 to 1081 (AGDA…DGGS).

Belongs to the archaeal DNA polymerase II family. In terms of assembly, heterodimer of a large subunit and a small subunit. In terms of processing, this protein undergoes a protein self splicing that involves a post-translational excision of the intervening region (intein) followed by peptide ligation.

The catalysed reaction is DNA(n) + a 2'-deoxyribonucleoside 5'-triphosphate = DNA(n+1) + diphosphate. It catalyses the reaction Exonucleolytic cleavage in the 3'- to 5'-direction to yield nucleoside 5'-phosphates.. In terms of biological role, possesses two activities: a DNA synthesis (polymerase) and an exonucleolytic activity that degrades single-stranded DNA in the 3'- to 5'-direction. Has a template-primer preference which is characteristic of a replicative DNA polymerase. The protein is DNA polymerase II large subunit (polC) of Halobacterium salinarum (strain ATCC 700922 / JCM 11081 / NRC-1) (Halobacterium halobium).